Reading from the N-terminus, the 266-residue chain is Elongation factor Ts (266 aa).

Positions 80–83 (TDFV) are involved in Mg(2+) ion dislocation from EF-Tu.

This sequence belongs to the EF-Ts family.

Its subcellular location is the cytoplasm. Associates with the EF-Tu.GDP complex and induces the exchange of GDP to GTP. It remains bound to the aminoacyl-tRNA.EF-Tu.GTP complex up to the GTP hydrolysis stage on the ribosome. The polypeptide is Elongation factor Ts (Buchnera aphidicola subsp. Baizongia pistaciae (strain Bp)).